The following is a 139-amino-acid chain: D-ribose pyranase (139 aa).

H20 functions as the Proton donor in the catalytic mechanism. Residues D28, H106, and 128 to 130 contribute to the substrate site; that span reads YAN.

This sequence belongs to the RbsD / FucU family. RbsD subfamily. As to quaternary structure, homodecamer.

The protein localises to the cytoplasm. The enzyme catalyses beta-D-ribopyranose = beta-D-ribofuranose. It participates in carbohydrate metabolism; D-ribose degradation; D-ribose 5-phosphate from beta-D-ribopyranose: step 1/2. Functionally, catalyzes the interconversion of beta-pyran and beta-furan forms of D-ribose. This is D-ribose pyranase from Escherichia coli O81 (strain ED1a).